Reading from the N-terminus, the 600-residue chain is ATP-dependent lipid A-core flippase (600 aa).

Helical transmembrane passes span Val26–Leu46, Leu82–Leu102, Val167–Ile187, and Pro266–Leu286. The ABC transmembrane type-1 domain maps to Leu30–Lys321. The 237-residue stretch at Leu353–Met589 folds into the ABC transporter domain. Gly387–Ser394 lines the ATP pocket.

It belongs to the ABC transporter superfamily. Lipid exporter (TC 3.A.1.106) family. As to quaternary structure, homodimer.

Its subcellular location is the cell inner membrane. It catalyses the reaction ATP + H2O + lipid A-core oligosaccharideSide 1 = ADP + phosphate + lipid A-core oligosaccharideSide 2.. Involved in lipopolysaccharide (LPS) biosynthesis. Translocates lipid A-core from the inner to the outer leaflet of the inner membrane. Transmembrane domains (TMD) form a pore in the inner membrane and the ATP-binding domain (NBD) is responsible for energy generation. In Pseudomonas savastanoi pv. phaseolicola (strain 1448A / Race 6) (Pseudomonas syringae pv. phaseolicola (strain 1448A / Race 6)), this protein is ATP-dependent lipid A-core flippase.